The following is a 243-amino-acid chain: uncharacterized protein (243 aa).

The N-terminal stretch at 1–19 is a signal peptide; it reads MDELALSFSLTCLLPENRA. N-linked (GlcNAc...) asparagine glycosylation occurs at N136.

The protein localises to the secreted. This is an uncharacterized protein from Homo sapiens (Human).